The primary structure comprises 469 residues: DENN domain-containing protein 2D (469 aa).

The disordered stretch occupies residues 17-44; sequence LPRLRAGQSQNNPGEAVTEPERIQEHSP. A uDENN domain is found at 55–204; sequence EYLLVVSLKK…AFPAPGKTVT (150 aa). The cDENN domain occupies 226-359; that stretch reads HLEHVDFSVL…LQDDILDSLG (134 aa). Residues 361–445 enclose the dDENN domain; sequence GINELKTSEQ…QEAEKSRNPP (85 aa).

It is found in the cytoplasm. In terms of biological role, guanine nucleotide exchange factor (GEF) which may activate RAB9A and RAB9B. Promotes the exchange of GDP to GTP, converting inactive GDP-bound Rab proteins into their active GTP-bound form. This chain is DENN domain-containing protein 2D (Dennd2d), found in Mus musculus (Mouse).